The primary structure comprises 699 residues: MSLAQEINRVVAPFEVISEFKPAGDQPTAIAELTERINNGEKDVVLLGATGTGKSATTAWLIEQVQRPTLVMVQNKTLAAQLANEFRELLPNNAVEYFVSYYDYYQPEAYVAQTDTFIEKDSSINEEVERLRHSATNALLTRRDVIVVATVSCIYGLGTPEEYIAGMVTLRKGAEMNRDHLLRKFVSMQYARNDMDFHRGTFRVRGDTVEIIPMYEELAIRIEFFGDEIENIQTLHPLTGEVLRDEEEMYVFPASHYVAGPERMARAIKRIEDELADRLKVLEGQNKLVEAQRLRMRTTYDLEMMQQMGFCNGIENYSVHIDGRNPGTAPHCLIDYFPDDFLLVVDESHVTIPQIGAMYEGDMSRKRNLVDFGFRLPSAMDNRPLKWDEFLERIGQTVYLSATPGKYELGKADGYVQQIIRPTGLIDPEVVVKPTKGQIDDLLGEIRTRTEKNERVLVTTLTKRMAEDLTDYLVGHGVKVEYLHSDVDTLRRVELLRELRMGVFDVLVGINLLREGLDLPEVSLVSILDADKEGFLRSSTSLIQTIGRAARNVSGQVHMYADRITDSMAHAIEETNRRRAIQVQYNTDHGIDPQPLRKKIADITDQLAKEDADTQELLNNNRLAKGGKRGKSAAKGAATVRQDGLAAAPAEDLVGLIEQLTEQMHGAAAELQFEVAARIRDEVKELKRELRQMQSAGHA.

The Helicase ATP-binding domain occupies 35-188; sequence ERINNGEKDV…DHLLRKFVSM (154 aa). 48 to 55 contributes to the ATP binding site; that stretch reads GATGTGKS. The short motif at 101 to 124 is the Beta-hairpin element; it reads YYDYYQPEAYVAQTDTFIEKDSSI. The Helicase C-terminal domain occupies 438 to 604; it reads QIDDLLGEIR…PLRKKIADIT (167 aa). In terms of domain architecture, UVR spans 654 to 689; that stretch reads VGLIEQLTEQMHGAAAELQFEVAARIRDEVKELKRE.

Belongs to the UvrB family. In terms of assembly, forms a heterotetramer with UvrA during the search for lesions. Interacts with UvrC in an incision complex.

It localises to the cytoplasm. The UvrABC repair system catalyzes the recognition and processing of DNA lesions. A damage recognition complex composed of 2 UvrA and 2 UvrB subunits scans DNA for abnormalities. Upon binding of the UvrA(2)B(2) complex to a putative damaged site, the DNA wraps around one UvrB monomer. DNA wrap is dependent on ATP binding by UvrB and probably causes local melting of the DNA helix, facilitating insertion of UvrB beta-hairpin between the DNA strands. Then UvrB probes one DNA strand for the presence of a lesion. If a lesion is found the UvrA subunits dissociate and the UvrB-DNA preincision complex is formed. This complex is subsequently bound by UvrC and the second UvrB is released. If no lesion is found, the DNA wraps around the other UvrB subunit that will check the other stand for damage. This Paenarthrobacter aurescens (strain TC1) protein is UvrABC system protein B.